We begin with the raw amino-acid sequence, 352 residues long: Alanine racemase (352 aa).

Residue K34 is the Proton acceptor; specific for D-alanine of the active site. At K34 the chain carries N6-(pyridoxal phosphate)lysine. R126 provides a ligand contact to substrate. Catalysis depends on Y248, which acts as the Proton acceptor; specific for L-alanine. M296 provides a ligand contact to substrate.

Belongs to the alanine racemase family. The cofactor is pyridoxal 5'-phosphate.

It catalyses the reaction L-alanine = D-alanine. Its pathway is amino-acid biosynthesis; D-alanine biosynthesis; D-alanine from L-alanine: step 1/1. In terms of biological role, catalyzes the interconversion of L-alanine and D-alanine. May also act on other amino acids. The chain is Alanine racemase (alr) from Deinococcus deserti (strain DSM 17065 / CIP 109153 / LMG 22923 / VCD115).